A 478-amino-acid chain; its full sequence is Dihydrolipoyl dehydrogenase (478 aa).

FAD-binding positions include 34 to 49, lysine 58, and glycine 122; that span reads EKYI…GGTC. The cysteines at positions 49 and 54 are disulfide-linked. Residues 188-192, glutamate 211, valine 245, and 276-279 contribute to the NAD(+) site; these read GAGVI and AVGR. 2 residues coordinate FAD: aspartate 319 and alanine 327. Histidine 451 serves as the catalytic Proton acceptor.

It belongs to the class-I pyridine nucleotide-disulfide oxidoreductase family. In terms of assembly, homodimer. The cofactor is FAD.

It localises to the cytoplasm. It catalyses the reaction N(6)-[(R)-dihydrolipoyl]-L-lysyl-[protein] + NAD(+) = N(6)-[(R)-lipoyl]-L-lysyl-[protein] + NADH + H(+). The branched-chain alpha-keto dehydrogenase complex catalyzes the overall conversion of alpha-keto acids to acyl-CoA and CO(2). It contains multiple copies of 3 enzymatic components: branched-chain alpha-keto acid decarboxylase (E1), lipoamide acyltransferase (E2) and lipoamide dehydrogenase (E3). Its function is as follows. Also acts in the glycine cleavage system. This Pseudomonas aeruginosa (strain ATCC 15692 / DSM 22644 / CIP 104116 / JCM 14847 / LMG 12228 / 1C / PRS 101 / PAO1) protein is Dihydrolipoyl dehydrogenase (lpdG).